A 361-amino-acid polypeptide reads, in one-letter code: Tegument protein UL51 homolog (361 aa).

Cys8 carries S-palmitoyl cysteine; by host lipidation. Residues 251-299 are disordered; that stretch reads GDEEDEVTVMSPSPEPVQQQPPVEPVQQQPQGRGSHRRRYKESAPQETL. The segment covering 266-281 has biased composition (low complexity); the sequence is PVQQQPPVEPVQQQPQ.

This sequence belongs to the herpesviridae UL51 family. Oligomerizes. Interacts with UL103; this interaction mediates UL103 incorporation to virions. Phosphorylated. Post-translationally, palmitoylation is necessary for Golgi localization.

The protein resides in the virion tegument. It localises to the host cytoplasm. It is found in the host Golgi apparatus. In terms of biological role, plays several roles during the time course of infection, including egress of virus particles from the perinuclear space and secondary envelopment of cytoplasmic capsids that bud into specific trans-Golgi network (TGN)-derived membranes. This Homo sapiens (Human) protein is Tegument protein UL51 homolog (UL71).